A 615-amino-acid polypeptide reads, in one-letter code: MAVYHGMLRFGRLCIASLGARGPRTLLSRPRPNSKLQSVRALSSGMVNCTNPLPIGGLSYIQGHTDSHLVNTTVGECLDATAQRFPDREALVILHENIRLNFAQLKEEVDKAASGLLSIGLRKGDRLGMWGPNSYAWVLIQLATAQAGIILVSVNPAYQSSELEYVLRKVGCKGIVFPKQFKTQQYYDILKQVCPELEKAQPGALKSERLPDLTTVISVDAPLPGTLLLDDIVAAGGKEQNLAQLRYNQRFLSCYDPINIQFTSGTTGNPKGATLSHHNIVNNSMLIGQRLKMPTKTAEELRLVLPSPLYHCLGSVGGTMVSMMHGATLLLSSPSFNGKKALEAISREKGTLLYGTPTMFVDILNQPDFSSYDFTSIRGGVIAGSPAPPELIRAIINKMNMKELVVVYGTTENSPVTFMNFPEDTLEQKAGSVGRIMPHTEAQIVNVETGELTNLNVPGELYIRGYCVMQGYWGEPQKTFETVGQDKWYRTGDIALMDEQGFCKIVGRSKDMIIRGGENIYPAELEDFFLKHPQVQEAQVVGVKDERMGEEICACIRLKSGETTTAEEIKAFCKGKISHFKIPRYIVFVEGYPLTISGKIQKFKLREQMEQHLKL.

Residues 1–41 (MAVYHGMLRFGRLCIASLGARGPRTLLSRPRPNSKLQSVRA) constitute a mitochondrion transit peptide. The residue at position 179 (Lys-179) is an N6-acetyllysine. Lys-182 is modified (N6-acetyllysine; alternate). The residue at position 182 (Lys-182) is an N6-succinyllysine; alternate. Lys-199 is modified (N6-acetyllysine). 263 to 271 (TSGTTGNPK) is a binding site for ATP. N6-acetyllysine is present on residues Lys-340 and Lys-398. Lys-478 is modified (N6-succinyllysine). ATP is bound by residues Asp-493 and Arg-508. Lys-510 is modified (N6-acetyllysine). An N6-acetyllysine; alternate mark is found at Lys-544 and Lys-570. 2 positions are modified to N6-succinyllysine; alternate: Lys-544 and Lys-570. Lys-599 contributes to the ATP binding site. N6-succinyllysine is present on Lys-599.

The protein belongs to the ATP-dependent AMP-binding enzyme family.

It localises to the mitochondrion. The enzyme catalyses a medium-chain fatty acid + ATP + CoA = a medium-chain fatty acyl-CoA + AMP + diphosphate. It catalyses the reaction octanoate + ATP + CoA = octanoyl-CoA + AMP + diphosphate. Acyl-CoA synthases catalyze the initial reaction in fatty acid metabolism, by forming a thioester with CoA. Has some preference toward medium-chain substrates. Plays a role in adipocyte differentiation. The chain is Medium-chain acyl-CoA ligase ACSF2, mitochondrial from Mus musculus (Mouse).